Here is a 374-residue protein sequence, read N- to C-terminus: Chaperone protein DnaJ (374 aa).

The J domain maps to 4–69; sequence DFYETLCVSR…QKRAAYDRFG (66 aa). The CR-type zinc-finger motif lies at 131 to 210; that stretch reads GKTAQIRVPT…CSGQGRLTEE (80 aa). C144, C147, C161, C164, C184, C187, C198, and C201 together coordinate Zn(2+). CXXCXGXG motif repeat units lie at residues 144 to 151, 161 to 168, 184 to 191, and 198 to 205; these read CDECAGSG, CPMCHGAG, CPQCQGRG, and CRKCSGQG.

It belongs to the DnaJ family. Homodimer. Zn(2+) serves as cofactor.

The protein resides in the cytoplasm. Its function is as follows. Participates actively in the response to hyperosmotic and heat shock by preventing the aggregation of stress-denatured proteins and by disaggregating proteins, also in an autonomous, DnaK-independent fashion. Unfolded proteins bind initially to DnaJ; upon interaction with the DnaJ-bound protein, DnaK hydrolyzes its bound ATP, resulting in the formation of a stable complex. GrpE releases ADP from DnaK; ATP binding to DnaK triggers the release of the substrate protein, thus completing the reaction cycle. Several rounds of ATP-dependent interactions between DnaJ, DnaK and GrpE are required for fully efficient folding. Also involved, together with DnaK and GrpE, in the DNA replication of plasmids through activation of initiation proteins. This is Chaperone protein DnaJ from Chelativorans sp. (strain BNC1).